The sequence spans 473 residues: Uronate isomerase (473 aa).

It belongs to the metallo-dependent hydrolases superfamily. Uronate isomerase family.

The catalysed reaction is D-glucuronate = D-fructuronate. It carries out the reaction aldehydo-D-galacturonate = keto-D-tagaturonate. It functions in the pathway carbohydrate metabolism; pentose and glucuronate interconversion. This Bacillus licheniformis (strain ATCC 14580 / DSM 13 / JCM 2505 / CCUG 7422 / NBRC 12200 / NCIMB 9375 / NCTC 10341 / NRRL NRS-1264 / Gibson 46) protein is Uronate isomerase.